The sequence spans 191 residues: Molybdenum cofactor guanylyltransferase (191 aa).

Residues 11-13 (LCG), lysine 23, aspartate 66, and aspartate 97 each bind GTP. A Mg(2+)-binding site is contributed by aspartate 97.

This sequence belongs to the MobA family. In terms of assembly, monomer. The cofactor is Mg(2+).

The protein localises to the cytoplasm. It catalyses the reaction Mo-molybdopterin + GTP + H(+) = Mo-molybdopterin guanine dinucleotide + diphosphate. In terms of biological role, transfers a GMP moiety from GTP to Mo-molybdopterin (Mo-MPT) cofactor (Moco or molybdenum cofactor) to form Mo-molybdopterin guanine dinucleotide (Mo-MGD) cofactor. The protein is Molybdenum cofactor guanylyltransferase of Campylobacter jejuni subsp. jejuni serotype O:2 (strain ATCC 700819 / NCTC 11168).